The primary structure comprises 358 residues: uncharacterized protein (358 aa).

Positions 229 to 264 (KQLHEFKLAFDYFDQEKNGWLDYEHFELCLKSQGYN) constitute an EF-hand domain. Ca(2+) contacts are provided by Asp-242, Asn-246, Trp-248, and His-253.

This is an uncharacterized protein from Caenorhabditis elegans.